The following is a 610-amino-acid chain: UvrABC system protein C (610 aa).

The GIY-YIG domain maps to 16–94 (SQPGVYRMYD…IKLYQPRYNV (79 aa)). A UVR domain is found at 204–239 (DQVLTQLISRMETASQNLEFEEAARIRDQIQAVRRV).

Belongs to the UvrC family. Interacts with UvrB in an incision complex.

It localises to the cytoplasm. The UvrABC repair system catalyzes the recognition and processing of DNA lesions. UvrC both incises the 5' and 3' sides of the lesion. The N-terminal half is responsible for the 3' incision and the C-terminal half is responsible for the 5' incision. In Shigella boydii serotype 18 (strain CDC 3083-94 / BS512), this protein is UvrABC system protein C.